The primary structure comprises 860 residues: MEGLEIEDEDVILLDEDDDSSSSSTVNNSSSNIKNNGNTNNNIGNDDSNKVTLMTSLREKGWGSGMLVDKEKNQYGTIKSYKDDKSSPWFEERQVIATLYKARVLLHEMIYTKMNQERLLSGNLCVGEIQSLLNTQKEDVETDWIAEIQELKRNMVAEIRRNHLLERDVNKLDKRIALLIKHRSNIKDLLLEQNKGKKDKKKKGDDKAEYITLDQKQLESYQNLFYLLQTEPHYLAKLVTLIQADQMEDFLDTVFLTLFGDDFSPREEFLILSLFRLAIGQEMSRIKSAGDLLAVESVVPKMIITYTRRKQGHEFLKQIIAPILENNVVNAPDLNLELNAVQVYQNMISEQEIQTGAKSTLNRGLAEDQIIQLKEVQSILEPRVEKCIQICERFFTGIIQSLNRLPYGIRWICKQIQSIAQKNFDSKPDEIAKVIGYFVYYRFINLAIVTPDAFEILDKELSITSRKNLVNIAKVLQNLFTLKTFQNQGSERWMQPLNKWILSKTSIVRQYLEDLIQVTDPSEYLRVDKYNELTLKLNPVVVISLGEISQTHRLLIANLAALKMKEKEDPLELILKALPAPLEVVDENDREIQLTLINRFKENIEKEISISASLLAETKELVISVLRSIPIQQKQQQQQHDDEKRDDLISILQNAIKHGKETNNPQLSSNAEKIINNLKKMEAEGSIQSENNQYEGFIKVIALEVINRQEIREQQRKERMRLTIALRDLRKHQSYLNDQIQHYTSYLKDVLLHYGPKDKKKSTKPMKISFKELTKKGVIVESDIPKLSHGSTSFYISSDAPGIFDIEARIGVASVGTLSLSLDDLLDKSSAGIPYLKLENIVLDVNMTLHLLNRHFLKNI.

The segment covering 1 to 20 has biased composition (acidic residues); the sequence is MEGLEIEDEDVILLDEDDDS. The segment at 1–48 is disordered; the sequence is MEGLEIEDEDVILLDEDDDSSSSSTVNNSSSNIKNNGNTNNNIGNDDS. A compositionally biased stretch (low complexity) spans 21-46; it reads SSSSTVNNSSSNIKNNGNTNNNIGND. Residues 146 to 185 adopt a coiled-coil conformation; it reads AEIQELKRNMVAEIRRNHLLERDVNKLDKRIALLIKHRSN. Positions 269-515 constitute a Ras-GAP domain; that stretch reads FLILSLFRLA…SIVRQYLEDL (247 aa). Residues 663–732 adopt a coiled-coil conformation; sequence NNPQLSSNAE…TIALRDLRKH (70 aa).

In terms of assembly, heterotetramer. Quaternary complex with activated rac1A, ctxA and ctxB in the absence of rgaA.

In terms of biological role, part of signaling pathway that is required for completion of cytokinesis. gapA and rgaA control cortexillin localization to the cleavage furrow and hence may be involved in cleavage of the midbody in the final stage of cytokinesis by regulating the actin cytoskeleton. Forms a complex by linking activated rac1A to ctxA in the absence of rgaA. Assembly of this complex is necessary for the recruitment of cortexillin to the midzone of the dividing cell. The sequence is that of Ras GTPase-activating-like protein gapA (gapA) from Dictyostelium discoideum (Social amoeba).